A 145-amino-acid chain; its full sequence is Selenoprotein M (145 aa).

Positions 1–23 are cleaved as a signal peptide; sequence MSILLSPPSLLLLLAALVAPATS. Active-site nucleophile residues include Cys-45 and Sec-48. The segment at residues 45-48 is a cross-link (cysteinyl-selenocysteine (Cys-Sec)); it reads CGGU. Position 48 (Sec-48) is a non-standard amino acid, selenocysteine. The disordered stretch occupies residues 125 to 145; that stretch reads PPEYLWAPAKPPEEASEHDDL.

It belongs to the selenoprotein M/F family. As to expression, widely expressed. Highly expressed in brain.

Its subcellular location is the cytoplasm. It localises to the perinuclear region. The protein resides in the endoplasmic reticulum. It is found in the golgi apparatus. Its function is as follows. May function as a thiol-disulfide oxidoreductase that participates in disulfide bond formation. The sequence is that of Selenoprotein M from Mus musculus (Mouse).